Here is a 458-residue protein sequence, read N- to C-terminus: NADH-quinone oxidoreductase subunit N (458 aa).

14 helical membrane passes run Leu2–Leu22, Ile30–Ser50, Gly62–Ile82, Ala93–Ile113, Phe118–Phe138, Phe153–Phe173, Leu196–Leu216, Phe235–Ile255, Ile261–Ala281, Leu290–Asn310, Leu319–Phe339, Ile361–Phe381, Phe397–Val417, and Leu438–Phe458.

This sequence belongs to the complex I subunit 2 family. In terms of assembly, NDH-1 is composed of 14 different subunits. Subunits NuoA, H, J, K, L, M, N constitute the membrane sector of the complex.

It localises to the cell inner membrane. It carries out the reaction a quinone + NADH + 5 H(+)(in) = a quinol + NAD(+) + 4 H(+)(out). Its function is as follows. NDH-1 shuttles electrons from NADH, via FMN and iron-sulfur (Fe-S) centers, to quinones in the respiratory chain. The immediate electron acceptor for the enzyme in this species is believed to be ubiquinone. Couples the redox reaction to proton translocation (for every two electrons transferred, four hydrogen ions are translocated across the cytoplasmic membrane), and thus conserves the redox energy in a proton gradient. The protein is NADH-quinone oxidoreductase subunit N of Rickettsia typhi (strain ATCC VR-144 / Wilmington).